Reading from the N-terminus, the 224-residue chain is Cysteine S-methyltransferase NleE (224 aa).

The tract at residues 49–52 (GITR) is interaction with host proteins TAB2, TAB3 and ZRANB3. Residues alanine 92, serine 98, arginine 107, glutamine 111, tyrosine 204, and glutamate 208 each coordinate S-adenosyl-L-methionine.

The protein belongs to the NleE/OspZ family. In terms of assembly, monomer.

Its subcellular location is the secreted. The protein resides in the host nucleus. It carries out the reaction L-cysteinyl-[protein] + S-adenosyl-L-methionine = S-methyl-L-cysteinyl-[protein] + S-adenosyl-L-homocysteine + H(+). Its function is as follows. Cysteine methyltransferase effector that inhibits host cell NF-kappa-B activation by preventing nuclear translocation of host protein RELA/p65. Acts by mediating cysteine methylation of host proteins TAB2 and TAB3: methylation of a conserved cysteine residue of the RanBP2-type zinc finger (NZF) of TAB2 and TAB3 disrupts zinc-binding, thereby inactivating the ubiquitin chain-binding activity of TAB2 and TAB3, leading to NF-kappa-B inactivation. Also mediates cysteine methylation of host protein ZRANB3, inactivating its ability to bind ubiquitin chains. This Escherichia coli O157:H7 protein is Cysteine S-methyltransferase NleE.